The chain runs to 862 residues: Switch 2 (862 aa).

2 disordered regions span residues 13-43 (PCGSFPSSSSLRVSSTQELEPSRKPPKSSLS) and 58-95 (KHESKISKTQVEDFDHNEDDHKRNIKFDEEEVDEDDER). Positions 16–27 (SFPSSSSLRVSS) are enriched in low complexity. A compositionally biased stretch (basic and acidic residues) spans 58–84 (KHESKISKTQVEDFDHNEDDHKRNIKF). The segment covering 85 to 95 (DEEEVDEDDER) has biased composition (acidic residues). The Helicase ATP-binding domain occupies 151-323 (YNLYKNNHGG…FNLFEWVAPG (173 aa)). 164–171 (DDMGLGKT) contacts ATP. The DEAH box motif lies at 274-277 (DEAH). Residues 274 to 294 (DEAHRLKNEKSKLYEACLEIK) are a coiled coil. The Helicase C-terminal domain occupies 532–685 (ALEKLMASWI…VAGKMETRYF (154 aa)). Positions 782–793 (TTSTSQRLNGDG) are enriched in polar residues. Positions 782–821 (TTSTSQRLNGDGNSADRKKKKRKGCSEEEDMSSSNREQKR) are disordered.

It belongs to the SNF2/RAD54 helicase family.

Its function is as follows. May be involved in early DNA damage response. Probable chromatin remodeling factor. This chain is Switch 2, found in Arabidopsis thaliana (Mouse-ear cress).